Reading from the N-terminus, the 491-residue chain is MSETSKSESLDPEVSEGLCSKTLMQSIVHELKLQMRIGLPLVVMNLLWFGKMTTTSVFLGRQGELNLAGGSLGFSFANVTGFSVLYGISAAMEPICGQAFGAKNFKLLHKTLFMAVLLLLLISVPISFLWLNVHKILTGFGQREDISFIAKKYLLYLLPELPILSFLCPLKAYLSSQGVTLPIMFTTAAATSLHIPINIVLSKARGIEGVAMAVWITDFIVVILLTGYVIVVERMKENKWKQGGWLNQSAQDWLTLIKLSGPCCLTVCLEWWCYEILVLLTGRLPNPVQAVSILIIVFNFDYLLYAVMLSLGTCVATRVSNELGANNPKGAYRAAYTTLIVGIISGCIGALVMIAFRGFWGSLYTHHDQLILNGVKKMMLIMAVIEVVNFPLMVCGEIVRGTAKPSLGMYANLSGFYLLALPLGATLAFKAKQGLQGFLIGLFVGISLCLSILLIFIARIDWEKEAGKAQILTCNTEDEQTSQGSGQDSHS.

Helical transmembrane passes span 39-59 (LPLV…SVFL), 72-92 (LGFS…SAAM), 111-131 (TLFM…FLWL), 154-174 (LLYL…KAYL), 181-201 (LPIM…NIVL), 212-232 (MAVW…VIVV), 261-281 (GPCC…VLLT), 291-311 (VSIL…MLSL), 336-356 (YTTL…MIAF), 379-399 (MLIM…GEIV), 409-429 (MYAN…TLAF), and 438-458 (FLIG…IFIA).

It belongs to the multi antimicrobial extrusion (MATE) (TC 2.A.66.1) family. As to quaternary structure, interacts with BCA4 and HT1. Preferentially expressed in guard cells.

It is found in the cell membrane. In terms of biological role, could function as a HCO(3)(-) -sensing component in the CO(2) signaling pathway in guard cells. Acts as an upstream repressor of HT1. Plays a role in stomatal response to CO(2). This is Protein DETOXIFICATION 56 from Arabidopsis thaliana (Mouse-ear cress).